A 122-amino-acid chain; its full sequence is Large ribosomal subunit protein uL14 (122 aa).

The protein belongs to the universal ribosomal protein uL14 family. In terms of assembly, part of the 50S ribosomal subunit. Forms a cluster with proteins L3 and L19. In the 70S ribosome, L14 and L19 interact and together make contacts with the 16S rRNA in bridges B5 and B8.

In terms of biological role, binds to 23S rRNA. Forms part of two intersubunit bridges in the 70S ribosome. This is Large ribosomal subunit protein uL14 from Bordetella parapertussis (strain 12822 / ATCC BAA-587 / NCTC 13253).